Reading from the N-terminus, the 209-residue chain is Small ribosomal subunit protein uS3 (209 aa).

One can recognise a KH type-2 domain in the interval 17–86; it reads IDEFLEKELR…NPQIEVEEIK (70 aa).

It belongs to the universal ribosomal protein uS3 family. In terms of assembly, part of the 30S ribosomal subunit.

In terms of biological role, binds the lower part of the 30S subunit head. This is Small ribosomal subunit protein uS3 from Thermococcus kodakarensis (strain ATCC BAA-918 / JCM 12380 / KOD1) (Pyrococcus kodakaraensis (strain KOD1)).